Consider the following 438-residue polypeptide: Glutaryl-CoA dehydrogenase, mitochondrial (438 aa).

The N-terminal 44 residues, 1-44 (MALRGVSVRLLSRGPGLHVLRTWVSSAAQTEKGGRTQSQLAKSS), are a transit peptide targeting the mitochondrion. Residues 138-139 (RS) and serine 186 contribute to the substrate site. Residues 177–186 (FGLTEPNSGS) and 212–214 (WIT) each bind FAD. Lysine 240 is subject to N6-acetyllysine. Position 287–294 (287–294 (FGCLNNAR)) interacts with substrate. FAD contacts are provided by residues arginine 319, glutamine 330, and 387–391 (DMLGG). Glutamate 414 serves as the catalytic Proton acceptor. Glycine 415 contributes to the substrate binding site. FAD is bound by residues 416–418 (THD) and phenylalanine 434.

Belongs to the acyl-CoA dehydrogenase family. Homotetramer. FAD is required as a cofactor. Isoform Long and isoform Short are expressed in fibroblasts and liver.

The protein resides in the mitochondrion matrix. The enzyme catalyses glutaryl-CoA + oxidized [electron-transfer flavoprotein] + 2 H(+) = (2E)-butenoyl-CoA + reduced [electron-transfer flavoprotein] + CO2. Its pathway is amino-acid metabolism; lysine degradation. It participates in amino-acid metabolism; tryptophan metabolism. With respect to regulation, strongly inhibited by MCPA-CoA, a metabolite of hypoglycin which is present in unripened fruit of the ackee tree. In terms of biological role, catalyzes the oxidative decarboxylation of glutaryl-CoA to crotonyl-CoA and CO(2) in the degradative pathway of L-lysine, L-hydroxylysine, and L-tryptophan metabolism. It uses electron transfer flavoprotein as its electron acceptor. Isoform Short is inactive. The polypeptide is Glutaryl-CoA dehydrogenase, mitochondrial (GCDH) (Homo sapiens (Human)).